The primary structure comprises 111 residues: Large ribosomal subunit protein uL22 (111 aa).

It belongs to the universal ribosomal protein uL22 family. In terms of assembly, part of the 50S ribosomal subunit.

Its function is as follows. This protein binds specifically to 23S rRNA; its binding is stimulated by other ribosomal proteins, e.g. L4, L17, and L20. It is important during the early stages of 50S assembly. It makes multiple contacts with different domains of the 23S rRNA in the assembled 50S subunit and ribosome. In terms of biological role, the globular domain of the protein is located near the polypeptide exit tunnel on the outside of the subunit, while an extended beta-hairpin is found that lines the wall of the exit tunnel in the center of the 70S ribosome. The sequence is that of Large ribosomal subunit protein uL22 from Xanthomonas euvesicatoria pv. vesicatoria (strain 85-10) (Xanthomonas campestris pv. vesicatoria).